The following is a 627-amino-acid chain: Chaperone protein DnaK (627 aa).

T197 bears the Phosphothreonine; by autocatalysis mark. Positions 602–611 are enriched in polar residues; that stretch reads ENQHSEANTV. Positions 602–627 are disordered; it reads ENQHSEANTVNDEKVVDADFQDVDKK. A compositionally biased stretch (basic and acidic residues) spans 612 to 627; that stretch reads NDEKVVDADFQDVDKK.

It belongs to the heat shock protein 70 family.

In terms of biological role, acts as a chaperone. The chain is Chaperone protein DnaK from Rickettsia felis (strain ATCC VR-1525 / URRWXCal2) (Rickettsia azadi).